Here is a 342-residue protein sequence, read N- to C-terminus: S-adenosylmethionine:tRNA ribosyltransferase-isomerase (342 aa).

It belongs to the QueA family. Monomer.

The protein resides in the cytoplasm. The catalysed reaction is 7-aminomethyl-7-carbaguanosine(34) in tRNA + S-adenosyl-L-methionine = epoxyqueuosine(34) in tRNA + adenine + L-methionine + 2 H(+). It participates in tRNA modification; tRNA-queuosine biosynthesis. In terms of biological role, transfers and isomerizes the ribose moiety from AdoMet to the 7-aminomethyl group of 7-deazaguanine (preQ1-tRNA) to give epoxyqueuosine (oQ-tRNA). This chain is S-adenosylmethionine:tRNA ribosyltransferase-isomerase, found in Moorella thermoacetica (strain ATCC 39073 / JCM 9320).